A 119-amino-acid chain; its full sequence is DIEAQRVLRKDIAECARTLPKCVNQPDDPLARVDVWHCAMSKRGVYDNPDPAVVKEKNSKMCPKIITDPADVENCKKVVSRCVDRETQRPRSNRQKAINITGCILRAGVVEATVLAREK.

The protein belongs to the ant venom allergen 2/4 family. As to quaternary structure, homodimer; disulfide-linked. Expressed by the venom gland.

The protein resides in the secreted. The protein is Venom allergen 2 of Solenopsis richteri (Black imported fire ant).